Here is a 380-residue protein sequence, read N- to C-terminus: Chorismate synthase (380 aa).

Arg47 is a binding site for NADP(+). Residues Arg124–Ser126, Gly288, Lys303–Thr307, and Arg329 each bind FMN.

This sequence belongs to the chorismate synthase family. In terms of assembly, homotetramer. FMNH2 is required as a cofactor.

It carries out the reaction 5-O-(1-carboxyvinyl)-3-phosphoshikimate = chorismate + phosphate. It functions in the pathway metabolic intermediate biosynthesis; chorismate biosynthesis; chorismate from D-erythrose 4-phosphate and phosphoenolpyruvate: step 7/7. Its function is as follows. Catalyzes the anti-1,4-elimination of the C-3 phosphate and the C-6 proR hydrogen from 5-enolpyruvylshikimate-3-phosphate (EPSP) to yield chorismate, which is the branch point compound that serves as the starting substrate for the three terminal pathways of aromatic amino acid biosynthesis. This reaction introduces a second double bond into the aromatic ring system. The polypeptide is Chorismate synthase (Leptospira interrogans serogroup Icterohaemorrhagiae serovar copenhageni (strain Fiocruz L1-130)).